The sequence spans 399 residues: Argininosuccinate synthase (399 aa).

8–16 (AYSGGLDTS) serves as a coordination point for ATP. Position 87 (Tyr-87) interacts with L-citrulline. Gly-117 lines the ATP pocket. L-aspartate contacts are provided by Thr-119, Asn-123, and Asp-124. Asn-123 serves as a coordination point for L-citrulline. L-citrulline is bound by residues Arg-127, Ser-175, Glu-260, and Tyr-272.

The protein belongs to the argininosuccinate synthase family. Type 1 subfamily. In terms of assembly, homotetramer.

Its subcellular location is the cytoplasm. The enzyme catalyses L-citrulline + L-aspartate + ATP = 2-(N(omega)-L-arginino)succinate + AMP + diphosphate + H(+). It functions in the pathway amino-acid biosynthesis; L-arginine biosynthesis; L-arginine from L-ornithine and carbamoyl phosphate: step 2/3. This chain is Argininosuccinate synthase, found in Mycolicibacterium smegmatis (strain ATCC 700084 / mc(2)155) (Mycobacterium smegmatis).